A 232-amino-acid chain; its full sequence is Phosphatidylserine decarboxylase proenzyme (232 aa).

The active-site Schiff-base intermediate with substrate; via pyruvic acid is S190. A Pyruvic acid (Ser); by autocatalysis modification is found at S190.

Belongs to the phosphatidylserine decarboxylase family. PSD-A subfamily. Heterodimer of a large membrane-associated beta subunit and a small pyruvoyl-containing alpha subunit. Requires pyruvate as cofactor. In terms of processing, is synthesized initially as an inactive proenzyme. Formation of the active enzyme involves a self-maturation process in which the active site pyruvoyl group is generated from an internal serine residue via an autocatalytic post-translational modification. Two non-identical subunits are generated from the proenzyme in this reaction, and the pyruvate is formed at the N-terminus of the alpha chain, which is derived from the carboxyl end of the proenzyme. The post-translation cleavage follows an unusual pathway, termed non-hydrolytic serinolysis, in which the side chain hydroxyl group of the serine supplies its oxygen atom to form the C-terminus of the beta chain, while the remainder of the serine residue undergoes an oxidative deamination to produce ammonia and the pyruvoyl prosthetic group on the alpha chain.

It is found in the cell membrane. The catalysed reaction is a 1,2-diacyl-sn-glycero-3-phospho-L-serine + H(+) = a 1,2-diacyl-sn-glycero-3-phosphoethanolamine + CO2. It functions in the pathway phospholipid metabolism; phosphatidylethanolamine biosynthesis; phosphatidylethanolamine from CDP-diacylglycerol: step 2/2. Its function is as follows. Catalyzes the formation of phosphatidylethanolamine (PtdEtn) from phosphatidylserine (PtdSer). This Rhizobium etli (strain ATCC 51251 / DSM 11541 / JCM 21823 / NBRC 15573 / CFN 42) protein is Phosphatidylserine decarboxylase proenzyme.